A 385-amino-acid polypeptide reads, in one-letter code: Probable nitrate transporter NarT (385 aa).

The next 12 helical transmembrane spans lie at 14-34 (TLSL…MPYI), 47-67 (IILA…GYLT), 69-89 (IIGA…PIFF), 97-117 (GMLM…SVGV), 139-159 (GNIG…IIGW), 161-181 (TTVR…FIFG), 205-225 (LYYL…FGLF), 246-266 (GVFI…GDKF), 277-297 (IIMI…LFTI), 302-322 (ISIC…SYFA), 330-350 (GIVS…ITYV), and 359-379 (LAFI…GHLY).

It belongs to the major facilitator superfamily. Nitrate/nitrite porter (TC 2.A.1.8) family.

The protein resides in the cell membrane. Its function is as follows. Probably required for nitrate uptake under anoxic conditions. Also possibly involved in excretion of nitrite produced by the dissimilatory reduction of nitrate. The protein is Probable nitrate transporter NarT (narT) of Staphylococcus haemolyticus (strain JCSC1435).